Consider the following 85-residue polypeptide: YcgL domain-containing protein PC1_1941 (85 aa).

Residues 1-85 (MFCVIYRSAK…PVENLLNTPV (85 aa)) enclose the YcgL domain.

This chain is YcgL domain-containing protein PC1_1941, found in Pectobacterium carotovorum subsp. carotovorum (strain PC1).